We begin with the raw amino-acid sequence, 806 residues long: Polyribonucleotide nucleotidyltransferase (806 aa).

Mg(2+) contacts are provided by D488 and D494. The KH domain occupies 555-614; sequence PQIRTVQIPTDKIRDLIGPGGKTIRGIIEATQVKIDVDDTGRVNIASSDEEGLKKALAMI. An S1 motif domain is found at 624–691; the sequence is GKTYLGKVVR…EGNRIKLSRK (68 aa). Positions 698-806 are disordered; sequence RQKLGLPEPG…QGGGGNRGPQ (109 aa). A compositionally biased stretch (low complexity) spans 704–717; that stretch reads PEPGAEAPAAAEGQ. The segment covering 738-757 has biased composition (acidic residues); the sequence is GGEDFDDFDEEGGEGEGEDE. Residues 758 to 774 are compositionally biased toward basic and acidic residues; that stretch reads NFNREDTPNSAPGERRP. Residues 783-792 show a composition bias toward basic residues; sequence RGRRRRRGRG. Over residues 793–806 the composition is skewed to gly residues; it reads RGPGQGGGGNRGPQ.

It belongs to the polyribonucleotide nucleotidyltransferase family. Mg(2+) serves as cofactor.

It localises to the cytoplasm. It catalyses the reaction RNA(n+1) + phosphate = RNA(n) + a ribonucleoside 5'-diphosphate. Involved in mRNA degradation. Catalyzes the phosphorolysis of single-stranded polyribonucleotides processively in the 3'- to 5'-direction. The polypeptide is Polyribonucleotide nucleotidyltransferase (Acidobacterium capsulatum (strain ATCC 51196 / DSM 11244 / BCRC 80197 / JCM 7670 / NBRC 15755 / NCIMB 13165 / 161)).